Consider the following 892-residue polypeptide: MSKPDEYLSSNSVPLPPQDADVLTTACDYCIVACGYKVYRWPVGKEGGAKASENALGADFPHQMMMGAWASPAQHNVVSYRDQPHHVVVIADKDATVVNPGGNHSIRGGTLAEKCYNPSNRTRERLQHPMIRVNGKLTPVSWDLATEVMADISQYIIAKYGEHAWAVKSHSYQYFENVYAITKLAMTSIGTPAFAWHDKCSATNDATGLDDAGIDSFASSYEDWADCEVAFLSGVDPYETKTTLFTSHMMPGDKKFVFVTPHMTMGVAWSVKAGRGLWLPIIPGTDTVLHMALARIIIENDWQDQPFIDKWIANSWEVDSGYGRGTRNTGWQWRTTWGTWQSDWQDYRKFILAQEESKLDVAAQITGLSADDIRTAAEWIAKPKADGSHPKTSFMCEKGNYWSNNYMNSASFASLGLICGSGNRKGRMISRGGGHQRGGLSAGGNSEWLSPEKYPGRRKKSFNLDLWLMEGNIRFAWVIGTTWVAAMMGSNALEAKMRSLTAESPHQIKSLDRAAIFETLKARVDSGGMVMANSDLYPVVPVGTDFADIVYPVASWGEDNFTRCNSERRLRLYSKFYDAPGEAKPDWWIVQKFAQKMGLDKDGGYSWKDSNDVFEEVARFSRDGVLNYHPLAEKAKASGIKAQELLRGYGTTGIQTPIRERGGELVGTVRLHDPDNDWGEIEGSTVHTKALVAFNTHSGKAILLKSPWQYAGWIQFYEAIKPRAAKGEVWVTNGRVNETWQSGFDDRRKPYLSQRWPEGFIFINPEDARKKGIESGDYVEVVNDTVYIQTGQPQGVLDADLTFNQLMADGHIKITTGRFKTIAVVSDEMRPGVCQANFNVPSSPANAVVSAVPDPMTNNYRYKLGRGVLNKVGESPYKHNFTQMSLKPRNIV.

[3Fe-4S] cluster-binding residues include Cys-27, Cys-30, and Cys-34. Residues 431–442 (RGGGHQRGGLSA) show a composition bias toward gly residues. The disordered stretch occupies residues 431 to 452 (RGGGHQRGGLSAGGNSEWLSPE).

Belongs to the prokaryotic molybdopterin-containing oxidoreductase family. The iodate reductase (Idr) complex is composed of a molybdopterin-dependent iodate reductase (IdrA and IdrB subunits) and two associated peroxidases (IdrP1 and IdrP2). [3Fe-4S] cluster is required as a cofactor. It depends on Mo-bis(molybdopterin guanine dinucleotide) as a cofactor.

Its subcellular location is the periplasm. Functionally, involved in iodate respiration. Probably catalyzes the reduction of iodate (IO(3)(-)) to hypoiodous acid (HIO) and H(2)O(2), using a reduced cytochrome c as the electron donor. This chain is Iodate reductase subunit IdrA, found in Pseudomonas sp. (strain SCT).